The sequence spans 683 residues: Heat shock protein homolog ECU03_0520 (683 aa).

This sequence belongs to the heat shock protein 70 family.

The protein localises to the cytoplasm. The chain is Heat shock protein homolog ECU03_0520 from Encephalitozoon cuniculi (strain GB-M1) (Microsporidian parasite).